A 657-amino-acid chain; its full sequence is Hemocyanin B chain (657 aa).

A disulfide bridge links cysteine 93 with cysteine 98. A glycan (N-linked (GlcNAc...) asparagine) is linked at asparagine 167. Residues histidine 194, histidine 198, histidine 224, histidine 344, histidine 348, and histidine 384 each coordinate Cu cation. Intrachain disulfides connect cysteine 483–cysteine 502 and cysteine 562–cysteine 609.

The protein belongs to the tyrosinase family. Hemocyanin subfamily. As to quaternary structure, hexamer of a number of different chains, of which A, B, and C have been identified. As to expression, hemolymph.

It is found in the secreted. The protein localises to the extracellular space. Hemocyanins are copper-containing oxygen carriers occurring freely dissolved in the hemolymph of many mollusks and arthropods. This is Hemocyanin B chain from Panulirus interruptus (California spiny lobster).